Here is a 100-residue protein sequence, read N- to C-terminus: Urease subunit gamma (100 aa).

This sequence belongs to the urease gamma subunit family. In terms of assembly, heterotrimer of UreA (gamma), UreB (beta) and UreC (alpha) subunits. Three heterotrimers associate to form the active enzyme.

The protein localises to the cytoplasm. It carries out the reaction urea + 2 H2O + H(+) = hydrogencarbonate + 2 NH4(+). It participates in nitrogen metabolism; urea degradation; CO(2) and NH(3) from urea (urease route): step 1/1. This is Urease subunit gamma from Ruegeria sp. (strain TM1040) (Silicibacter sp.).